Reading from the N-terminus, the 341-residue chain is Phosphate acyltransferase (341 aa).

Belongs to the PlsX family. In terms of assembly, homodimer. Probably interacts with PlsY.

The protein localises to the cytoplasm. The catalysed reaction is a fatty acyl-[ACP] + phosphate = an acyl phosphate + holo-[ACP]. Its pathway is lipid metabolism; phospholipid metabolism. In terms of biological role, catalyzes the reversible formation of acyl-phosphate (acyl-PO(4)) from acyl-[acyl-carrier-protein] (acyl-ACP). This enzyme utilizes acyl-ACP as fatty acyl donor, but not acyl-CoA. The protein is Phosphate acyltransferase of Ehrlichia ruminantium (strain Gardel).